A 450-amino-acid chain; its full sequence is L-lysine-epsilon aminotransferase (450 aa).

Pyridoxal 5'-phosphate-binding residues include G127 and A128. 2 residues coordinate 2-oxoglutarate: R168 and Q274. R168 is an L-lysine binding site. Q274 serves as a coordination point for pyridoxal 5'-phosphate. K300 carries the N6-(pyridoxal phosphate)lysine modification. 2-oxoglutarate is bound at residue R423.

It belongs to the class-III pyridoxal-phosphate-dependent aminotransferase family. Pyridoxal 5'-phosphate serves as cofactor.

It catalyses the reaction L-lysine + 2-oxoglutarate = (S)-2-amino-6-oxohexanoate + L-glutamate. It participates in antibiotic biosynthesis; cephamycin C biosynthesis. Catalyzes the transfer of the terminal amino group of L-lysine to alpha-ketoglutarate to yield L-glutamate and 2-aminoadipate 6-semialdehyde ((S)-2-amino-6-oxohexanoate), which is spontaneously converted to the dehydrated form 1-piperideine 6-carboxylate. In Amycolatopsis lactamdurans (Nocardia lactamdurans), this protein is L-lysine-epsilon aminotransferase.